A 447-amino-acid chain; its full sequence is Serine/threonine-protein phosphatase 2A 55 kDa regulatory subunit B gamma isoform (447 aa).

WD repeat units follow at residues 22 to 61 (TPAD…KNAP), 87 to 128 (EIEE…KRPE), 171 to 209 (GHTY…RSFN), 220 to 260 (DLTE…LCDK), 279 to 317 (EIIS…RPIE), 334 to 375 (ENDC…DVTL), and 410 to 446 (DFTK…NSDM).

Belongs to the phosphatase 2A regulatory subunit B family. PP2A consists of a common heterodimeric core enzyme, composed of a 36 kDa catalytic subunit (subunit C) and a 65 kDa constant regulatory subunit (PR65 or subunit A), that associates with a variety of regulatory subunits. Proteins that associate with the core dimer include three families of regulatory subunits B (the R2/B/PR55/B55, R3/B''/PR72/PR130/PR59 and R5/B'/B56 families), the 48 kDa variable regulatory subunit, viral proteins, and cell signaling molecules. Interacts with IER5.

Its function is as follows. The B regulatory subunit might modulate substrate selectivity and catalytic activity, and might also direct the localization of the catalytic enzyme to a particular subcellular compartment. In Macaca fascicularis (Crab-eating macaque), this protein is Serine/threonine-protein phosphatase 2A 55 kDa regulatory subunit B gamma isoform (PPP2R2C).